A 568-amino-acid chain; its full sequence is Sphingosine-1-phosphate lyase 1 (568 aa).

At 1-40 the chain is on the lumenal side; it reads MPSTDLLMLKAFEPYLEILEVYSTKAKNYVNGHCTKYEPW. Residues 41 to 61 traverse the membrane as a helical; Signal-anchor for type III membrane protein segment; sequence QLIAWSVVWTLLIVWGYEFVF. The Cytoplasmic portion of the chain corresponds to 62 to 568; it reads QPESLWSRFK…SQMNGSPKPH (507 aa). K353 carries the post-translational modification N6-(pyridoxal phosphate)lysine; alternate. K353 bears the N6-acetyllysine; alternate mark. Residues Y356 and Y366 each carry the 3'-nitrotyrosine modification. The residue at position 564 (S564) is a Phosphoserine.

The protein belongs to the group II decarboxylase family. Sphingosine-1-phosphate lyase subfamily. In terms of assembly, homodimer. Requires pyridoxal 5'-phosphate as cofactor. As to expression, ubiquitously expressed. Expressed in fetal and adult adrenal gland (at protein level).

Its subcellular location is the endoplasmic reticulum membrane. The enzyme catalyses sphinganine 1-phosphate = hexadecanal + phosphoethanolamine. The catalysed reaction is sphing-4-enine 1-phosphate = (2E)-hexadecenal + phosphoethanolamine. The protein operates within lipid metabolism; sphingolipid metabolism. Its function is as follows. Cleaves phosphorylated sphingoid bases (PSBs), such as sphingosine-1-phosphate, into fatty aldehydes and phosphoethanolamine. Elevates stress-induced ceramide production and apoptosis. Required for global lipid homeostasis in liver and cholesterol homeostasis in fibroblasts. Involved in the regulation of pro-inflammatory response and neutrophil trafficking. Modulates neuronal autophagy via phosphoethanolamine production which regulates accumulation of aggregate-prone proteins such as APP. Seems to play a role in establishing neuronal contact sites and axonal maintenance. In Homo sapiens (Human), this protein is Sphingosine-1-phosphate lyase 1.